A 192-amino-acid polypeptide reads, in one-letter code: Ion-translocating oxidoreductase complex subunit B (192 aa).

Residues 1–26 are hydrophobic; sequence MNTIWIAVGALTLLGLVFGAILGYAS. Residues 32–91 enclose the 4Fe-4S domain; that stretch reads EDDPVVEKIDAILPQSQCGQCGYPGCRPYAEAVGLQGEKINRCAPGGEAVMLKIAELLNV. Residues Cys-49, Cys-52, Cys-57, Cys-74, Cys-117, Cys-120, Cys-123, Cys-127, Cys-147, Cys-150, Cys-153, and Cys-157 each contribute to the [4Fe-4S] cluster site. 4Fe-4S ferredoxin-type domains lie at 108 to 137 and 138 to 167; these read MLAVIDENNCIGCTKCIQACPVDAIVGATR and AMHTVMSDLCTGCNLCVDPCPTHCIELRPV.

This sequence belongs to the 4Fe4S bacterial-type ferredoxin family. RnfB subfamily. As to quaternary structure, the complex is composed of six subunits: RsxA, RsxB, RsxC, RsxD, RsxE and RsxG. It depends on [4Fe-4S] cluster as a cofactor.

The protein localises to the cell inner membrane. In terms of biological role, part of a membrane-bound complex that couples electron transfer with translocation of ions across the membrane. Required to maintain the reduced state of SoxR. In Salmonella dublin (strain CT_02021853), this protein is Ion-translocating oxidoreductase complex subunit B.